The primary structure comprises 125 residues: Protein ApaG (125 aa).

Residues 1-125 (MIDSPRVCVQ…FRLAVPTFIH (125 aa)) form the ApaG domain.

The chain is Protein ApaG from Enterobacter sp. (strain 638).